Consider the following 256-residue polypeptide: Ribonuclease 3 (256 aa).

In terms of domain architecture, RNase III spans 3 to 125 (LDALQQRLGY…IVGAVFLDAG (123 aa)). Residue E38 participates in Mg(2+) binding. D42 is a catalytic residue. Residues D111 and E114 each coordinate Mg(2+). E114 is an active-site residue. The region spanning 152-222 (DAKTLLQEYL…AKLALDEVQK (71 aa)) is the DRBM domain. The tract at residues 229–256 (KRSRAERTGKTRKQPVPPDPQLSLRLKE) is disordered.

It belongs to the ribonuclease III family. In terms of assembly, homodimer. Mg(2+) is required as a cofactor.

The protein resides in the cytoplasm. It catalyses the reaction Endonucleolytic cleavage to 5'-phosphomonoester.. Its function is as follows. Digests double-stranded RNA. Involved in the processing of primary rRNA transcript to yield the immediate precursors to the large and small rRNAs (23S and 16S). Processes some mRNAs, and tRNAs when they are encoded in the rRNA operon. Processes pre-crRNA and tracrRNA of type II CRISPR loci if present in the organism. This is Ribonuclease 3 from Cupriavidus pinatubonensis (strain JMP 134 / LMG 1197) (Cupriavidus necator (strain JMP 134)).